The chain runs to 500 residues: 7-alpha-hydroxycholest-4-en-3-one 12-alpha-hydroxylase (500 aa).

Residues 2–21 (VLWGLLGALLMVMVGWLCLP) form a helical membrane-spanning segment. Phosphoserine is present on Ser-325. Cys-439 provides a ligand contact to heme.

This sequence belongs to the cytochrome P450 family. It depends on heme as a cofactor. In terms of tissue distribution, liver (at protein level).

It localises to the endoplasmic reticulum membrane. It is found in the microsome membrane. The enzyme catalyses 7alpha-hydroxycholest-4-en-3-one + reduced [NADPH--hemoprotein reductase] + O2 = 7alpha,12alpha-dihydroxycholest-4-en-3-one + oxidized [NADPH--hemoprotein reductase] + H2O + H(+). It carries out the reaction 5beta-cholestane-3alpha,7alpha-diol + reduced [NADPH--hemoprotein reductase] + O2 = 5beta-cholestane-3alpha,7alpha,12alpha-triol + oxidized [NADPH--hemoprotein reductase] + H2O + H(+). It catalyses the reaction chenodeoxycholate + reduced [NADPH--hemoprotein reductase] + O2 = cholate + oxidized [NADPH--hemoprotein reductase] + H2O + H(+). It participates in lipid metabolism; bile acid biosynthesis. Up-regulated upon treatment with streptozotocin. A cytochrome P450 monooxygenase involved in primary bile acid biosynthesis. Catalyzes the 12alpha-hydroxylation of 7alpha-hydroxy-4-cholesten-3-one, an intermediate metabolite in cholic acid biosynthesis. Controls biliary balance of cholic acid and chenodeoxycholic acid, ultimately regulating the intestinal absorption of dietary lipids. Mechanistically, uses molecular oxygen inserting one oxygen atom into a substrate, and reducing the second into a water molecule, with two electrons provided by NADPH via cytochrome P450 reductase (CPR; NADPH--hemoprotein reductase). This Oryctolagus cuniculus (Rabbit) protein is 7-alpha-hydroxycholest-4-en-3-one 12-alpha-hydroxylase (CYP8B1).